We begin with the raw amino-acid sequence, 433 residues long: Serine/threonine-protein kinase Sgk1 (433 aa).

The interval 66-92 (QDVELMNSNPSPPPSPSQQINLGPSSN) is disordered. Positions 83–92 (QQINLGPSSN) are enriched in polar residues. The Protein kinase domain maps to 100–357 (FDFLKVIGKG…FTEIKNHMFF (258 aa)). ATP-binding positions include 106–114 (IGKGSFGKV) and lysine 129. The active-site Proton acceptor is the aspartate 224. The 76-residue stretch at 358–433 (SPINWDDLNA…SYAPAMDSYL (76 aa)) folds into the AGC-kinase C-terminal domain.

It belongs to the protein kinase superfamily. AGC Ser/Thr protein kinase family.

It is found in the cytoplasm. The protein localises to the nucleus. The protein resides in the endoplasmic reticulum. The enzyme catalyses L-seryl-[protein] + ATP = O-phospho-L-seryl-[protein] + ADP + H(+). It catalyses the reaction L-threonyl-[protein] + ATP = O-phospho-L-threonyl-[protein] + ADP + H(+). Its function is as follows. Protein kinase that may play an important role in cellular stress response. May be involved in the regulation of processes such as cell survival, neuronal excitability and renal sodium excretion. The chain is Serine/threonine-protein kinase Sgk1 (sgk1) from Danio rerio (Zebrafish).